The chain runs to 248 residues: 3-deoxy-manno-octulosonate cytidylyltransferase (248 aa).

It belongs to the KdsB family.

It is found in the cytoplasm. The catalysed reaction is 3-deoxy-alpha-D-manno-oct-2-ulosonate + CTP = CMP-3-deoxy-beta-D-manno-octulosonate + diphosphate. It functions in the pathway nucleotide-sugar biosynthesis; CMP-3-deoxy-D-manno-octulosonate biosynthesis; CMP-3-deoxy-D-manno-octulosonate from 3-deoxy-D-manno-octulosonate and CTP: step 1/1. It participates in bacterial outer membrane biogenesis; lipopolysaccharide biosynthesis. In terms of biological role, activates KDO (a required 8-carbon sugar) for incorporation into bacterial lipopolysaccharide in Gram-negative bacteria. The protein is 3-deoxy-manno-octulosonate cytidylyltransferase of Escherichia coli O139:H28 (strain E24377A / ETEC).